Reading from the N-terminus, the 180-residue chain is MKTVKKAPVANRPNRINDEIRVKEVRLIDQDGEQAGIVSIQQALEMAEQAELDLVEISPNAEPPVCRIMNYGKFLYEKGKAAKEQKKKQKVVQVKEIKFRPGTDEGDYQVKLRSLIRFLEEGDKAKITVRFRGREMAHQDIGLEVLERVKNDLAEISVVESAPGRLEGRQAVMVLAPKKK.

The protein belongs to the IF-3 family. In terms of assembly, monomer.

It localises to the cytoplasm. IF-3 binds to the 30S ribosomal subunit and shifts the equilibrium between 70S ribosomes and their 50S and 30S subunits in favor of the free subunits, thus enhancing the availability of 30S subunits on which protein synthesis initiation begins. The polypeptide is Translation initiation factor IF-3 (Pasteurella multocida (strain Pm70)).